Reading from the N-terminus, the 55-residue chain is ATP synthase small subunit 6-A, mitochondrial (55 aa).

The N-terminal 11 residues, 1-11, are a transit peptide targeting the mitochondrion; the sequence is MRLFDPWPVFF. Residues 21–39 form a helical membrane-spanning segment; it reads FLTGFAVTGVLITKLTAGL.

This sequence belongs to the ATPase 6 subunit family.

Its subcellular location is the mitochondrion inner membrane. In terms of biological role, mitochondrial membrane ATP synthase (F(1)F(0) ATP synthase or Complex V) produces ATP from ADP in the presence of a proton gradient across the membrane which is generated by electron transport complexes of the respiratory chain. F-type ATPases consist of two structural domains, F(1) - containing the extramembraneous catalytic core and F(0) - containing the membrane proton channel, linked together by a central stalk and a peripheral stalk. During catalysis, ATP synthesis in the catalytic domain of F(1) is coupled via a rotary mechanism of the central stalk subunits to proton translocation. Part of the complex F(0) domain. Confers tolerance to several abiotic stresses (e.g. salt, mannitol, drought, oxidative and cold stresses), probably by providing additional energy needed for cell homeostasis. The chain is ATP synthase small subunit 6-A, mitochondrial from Arabidopsis thaliana (Mouse-ear cress).